Consider the following 884-residue polypeptide: Translation initiation factor IF-2 (884 aa).

The segment at 93–288 is disordered; it reads VNTPEAEQAK…KGKRKPSTLQ (196 aa). A compositionally biased stretch (basic and acidic residues) spans 99–209; it reads EQAKAEEQAQ…KMAAENEGKW (111 aa). The span at 216–229 shows a compositional bias: polar residues; sequence QTESADYHVTTSQH. The span at 231–246 shows a compositional bias: basic and acidic residues; it reads RAAEDENDAKVEGDRR. Residues 247–261 show a composition bias toward basic residues; that stretch reads SRTRGGKATKQKKGN. The span at 262-275 shows a compositional bias: basic and acidic residues; sequence KLSESKADREEARA. One can recognise a tr-type G domain in the interval 383-552; it reads HRAPVVTIMG…LLQAEVLELK (170 aa). A G1 region spans residues 392-399; the sequence is GHVDHGKT. Position 392 to 399 (392 to 399) interacts with GTP; the sequence is GHVDHGKT. A G2 region spans residues 417–421; sequence GITQH. Residues 438 to 441 form a G3 region; the sequence is DTPG. Residues 438-442 and 492-495 contribute to the GTP site; these read DTPGH and NKID. The G4 stretch occupies residues 492–495; the sequence is NKID. The segment at 528-530 is G5; that stretch reads SAK.

This sequence belongs to the TRAFAC class translation factor GTPase superfamily. Classic translation factor GTPase family. IF-2 subfamily.

It is found in the cytoplasm. Functionally, one of the essential components for the initiation of protein synthesis. Protects formylmethionyl-tRNA from spontaneous hydrolysis and promotes its binding to the 30S ribosomal subunits. Also involved in the hydrolysis of GTP during the formation of the 70S ribosomal complex. The sequence is that of Translation initiation factor IF-2 from Yersinia pestis bv. Antiqua (strain Angola).